A 703-amino-acid polypeptide reads, in one-letter code: MAELMLLSEIADPTRFFTDNLLSPEDWGLQNSTLYSGLDEVAEEQTQLFRCPEQDVPFDGSSLDVGMDVSPSEPPWELLPIFPDLQVKSEPSSPCSSSSLSSESSRLSTEPSSEALGVGEVLHVKTESLAPPLCLLGDDPTSSFETVQINVIPTSDDSSDVQTKIEPVSPCSSVNSEASLLSADSSSQAFIGEEVLEVKTESLSPSGCLLWDVPAPSLGAVQISMGPSLDGSSGKALPTRKPPLQPKPVVLTTVPMPSRAVPPSTTVLLQSLVQPPPVSPVVLIQGAIRVQPEGPAPSLPRPERKSIVPAPMPGNSCPPEVDAKLLKRQQRMIKNRESACQSRRKKKEYLQGLEARLQAVLADNQQLRRENAALRRRLEALLAENSELKLGSGNRKVVCIMVFLLFIAFNFGPVSISEPPSAPISPRMNKGEPQPRRHLLGFSEQEPVQGVEPLQGSSQGPKEPQPSPTDQPSFSNLTAFPGGAKELLLRDLDQLFLSSDCRHFNRTESLRLADELSGWVQRHQRGRRKIPQRAQERQKSQPRKKSPPVKAVPIQPPGPPERDSVGQLQLYRHPDRSQPAFLDAIDRREDTFYVVSFRRDHLLLPAISHNKTSRPKMSLVMPAMAPNETLSGRGAPGDYEEMMQIECEVMDTRVIHIKTSTVPPSLRKQPSPTPGNATGGPLPVSAASQAHQASHQPLYLNHP.

Alanine 2 bears the N-acetylalanine mark. The tract at residues 2-86 (AELMLLSEIA…ELLPIFPDLQ (85 aa)) is transcription activation. Residues 2–396 (AELMLLSEIA…ELKLGSGNRK (395 aa)) lie on the Cytoplasmic side of the membrane. 3 disordered regions span residues 87 to 114 (VKSEPSSPCSSSSLSSESSRLSTEPSSE), 229 to 248 (LDGSSGKALPTRKPPLQPKP), and 293 to 317 (EGPAPSLPRPERKSIVPAPMPGNSC). Positions 89-114 (SEPSSPCSSSSLSSESSRLSTEPSSE) are enriched in low complexity. The region spanning 325–388 (LLKRQQRMIK…EALLAENSEL (64 aa)) is the bZIP domain. Residues 327–347 (KRQQRMIKNRESACQSRRKKK) are basic motif. The tract at residues 350–357 (LQGLEARL) is leucine-zipper. A helical; Signal-anchor for type II membrane protein membrane pass occupies residues 397 to 417 (VVCIMVFLLFIAFNFGPVSIS). Topologically, residues 418-703 (EPPSAPISPR…SHQPLYLNHP (286 aa)) are lumenal. The disordered stretch occupies residues 447-479 (PVQGVEPLQGSSQGPKEPQPSPTDQPSFSNLTA). Asparagine 476 and asparagine 505 each carry an N-linked (GlcNAc...) asparagine glycan. The segment at 521-565 (QRHQRGRRKIPQRAQERQKSQPRKKSPPVKAVPIQPPGPPERDSV) is disordered. A compositionally biased stretch (basic residues) spans 522–531 (RHQRGRRKIP). Asparagine 610, asparagine 627, and asparagine 676 each carry an N-linked (GlcNAc...) asparagine glycan. Residues 660–676 (STVPPSLRKQPSPTPGN) are compositionally biased toward polar residues. The tract at residues 660–703 (STVPPSLRKQPSPTPGNATGGPLPVSAASQAHQASHQPLYLNHP) is disordered. A compositionally biased stretch (low complexity) spans 685 to 696 (SAASQAHQASHQ).

It belongs to the bZIP family. ATF subfamily. Homodimer and heterodimer with ATF6-alpha. The dimer interacts with the nuclear transcription factor Y (NF-Y) trimer through direct binding to NF-Y subunit C (NF-YC). N-glycosylated. In terms of processing, during unfolded protein response, a fragment of approximately 60 kDa containing the cytoplasmic transcription factor domain is released by proteolysis. The cleavage is probably performed sequentially by site-1 (MBTPS1, S1P) and site-2 (MBTPS2, S2P) proteases. In terms of tissue distribution, ubiquitous.

It localises to the endoplasmic reticulum membrane. The protein localises to the nucleus. In terms of biological role, precursor of the transcription factor form (Processed cyclic AMP-dependent transcription factor ATF-6 beta), which is embedded in the endoplasmic reticulum membrane. Endoplasmic reticulum stress promotes processing of this form, releasing the transcription factor form that translocates into the nucleus, where it activates transcription of genes involved in the unfolded protein response (UPR). Transcription factor that acts in the unfolded protein response (UPR) pathway by activating UPR target genes induced during ER stress. Binds DNA on the 5'-CCAC[GA]-3' half of the ER stress response element (ERSE) (5'-CCAATN(9)CCAC[GA]-3') when NF-Y is bound to ERSE. The polypeptide is Cyclic AMP-dependent transcription factor ATF-6 beta (ATF6B) (Homo sapiens (Human)).